Consider the following 440-residue polypeptide: GTPase Der (440 aa).

EngA-type G domains lie at alanine 5–glutamate 167 and isoleucine 178–serine 353. Residues glycine 11 to serine 18, aspartate 58 to isoleucine 62, asparagine 120 to glutamate 123, glycine 184 to serine 191, aspartate 231 to leucine 235, and asparagine 296 to aspartate 299 each bind GTP. Residues lysine 354 to glutamine 438 form the KH-like domain.

The protein belongs to the TRAFAC class TrmE-Era-EngA-EngB-Septin-like GTPase superfamily. EngA (Der) GTPase family. In terms of assembly, associates with the 50S ribosomal subunit.

Functionally, GTPase that plays an essential role in the late steps of ribosome biogenesis. The chain is GTPase Der from Natranaerobius thermophilus (strain ATCC BAA-1301 / DSM 18059 / JW/NM-WN-LF).